The chain runs to 271 residues: Regulatory protein RecX (271 aa).

Belongs to the RecX family.

It localises to the cytoplasm. In terms of biological role, modulates RecA activity. The polypeptide is Regulatory protein RecX (Geobacillus sp. (strain WCH70)).